The following is a 304-amino-acid chain: GTPase Era (304 aa).

The region spanning 11–179 (YCGFIAIVGR…QKIVRKSLRE (169 aa)) is the Era-type G domain. Positions 19-26 (GRPNVGKS) are G1. 19-26 (GRPNVGKS) serves as a coordination point for GTP. Residues 45–49 (QTTRH) are G2. The segment at 66 to 69 (DTPG) is G3. Residues 66 to 70 (DTPGL) and 128 to 131 (NKVD) contribute to the GTP site. Residues 128-131 (NKVD) are G4. The segment at 158 to 160 (ISA) is G5. Positions 210 to 287 (TGEELPYSVT…HLELWVKVKA (78 aa)) constitute a KH type-2 domain.

This sequence belongs to the TRAFAC class TrmE-Era-EngA-EngB-Septin-like GTPase superfamily. Era GTPase family. In terms of assembly, monomer.

The protein resides in the cytoplasm. It localises to the cell inner membrane. An essential GTPase that binds both GDP and GTP, with rapid nucleotide exchange. Plays a role in 16S rRNA processing and 30S ribosomal subunit biogenesis and possibly also in cell cycle regulation and energy metabolism. The sequence is that of GTPase Era from Haemophilus ducreyi (strain 35000HP / ATCC 700724).